Reading from the N-terminus, the 364-residue chain is UDP-arabinopyranose mutase 1 (364 aa).

Residues 110-112 carry the DXD motif motif; sequence DDD. An N-linked (Glc...) arginine glycan is attached at Arg-158.

The protein belongs to the RGP family. In terms of assembly, heteromers with UAM2 and UAM3. Requires Mn(2+) as cofactor. It depends on Mg(2+) as a cofactor. Post-translationally, reversibly glycosylated in vitro at Arg-158 by UDP-glucose. Reversibly glycosylated by UDP-xylose and UDP-galactose.

Its subcellular location is the golgi apparatus. It carries out the reaction UDP-beta-L-arabinofuranose = UDP-beta-L-arabinopyranose. UDP-L-arabinose mutase involved in the biosynthesis of cell wall non-cellulosic polysaccharides. Catalyzes the interconvertion of UDP-L-arabinopyranose (UDP-Arap) and UDP-L-arabinofuranose (UDP-Araf). Preferentially catalyzes the formation of UDP-Arap from UDP-Araf. At thermodynamic equilibrium in vitro the ratio of the pyranose form over the furanose form is 90:10. Is probably active as heteromer in vivo. The protein is UDP-arabinopyranose mutase 1 of Oryza sativa subsp. japonica (Rice).